Consider the following 321-residue polypeptide: Glucokinase (321 aa).

8 to 13 lines the ATP pocket; that stretch reads ADIGGT.

The protein belongs to the bacterial glucokinase family.

The protein localises to the cytoplasm. The catalysed reaction is D-glucose + ATP = D-glucose 6-phosphate + ADP + H(+). The sequence is that of Glucokinase from Photorhabdus laumondii subsp. laumondii (strain DSM 15139 / CIP 105565 / TT01) (Photorhabdus luminescens subsp. laumondii).